Consider the following 365-residue polypeptide: Poly(rC)-binding protein 2 (365 aa).

KH domains are found at residues 13 to 75 (TLTI…FAMI) and 97 to 162 (PVTL…VKQI). Lys-115 is covalently cross-linked (Glycyl lysine isopeptide (Lys-Gly) (interchain with G-Cter in SUMO2)). Phosphoserine is present on Ser-173. A Glycyl lysine isopeptide (Lys-Gly) (interchain with G-Cter in SUMO2) cross-link involves residue Lys-185. Phosphoserine occurs at positions 189 and 272. The KH 3 domain maps to 287–351 (TTSHELTIPN…ASISLAQYLI (65 aa)). Lys-322 participates in a covalent cross-link: Glycyl lysine isopeptide (Lys-Gly) (interchain with G-Cter in SUMO2). Residues Ser-364 and Ser-365 each carry the phosphoserine modification.

As to quaternary structure, identified in a mRNP complex, at least composed of DHX9, DDX3X, ELAVL1, HNRNPU, IGF2BP1, ILF3, PABPC1, PCBP2, PTBP2, STAU1, STAU2, SYNCRIP and YBX1. Interacts with IFIH1 and RNF135. Interacts with MAVS (via C-terminus) and ITCH (via WW domains). Interacts with CGAS; preventing the formation of liquid-like droplets in which CGAS is activated. Post-translationally, phosphorylated. The non-phosphorylated form(s) exhibited the strongest poly(rC)-binding activity. (Microbial infection) Proteolytically cleaved by picornavirus proteinase 3CD. In terms of tissue distribution, detected in all tissues examined.

Its subcellular location is the nucleus. The protein localises to the cytoplasm. In terms of biological role, single-stranded nucleic acid binding protein that binds preferentially to oligo dC. Major cellular poly(rC)-binding protein. Also binds poly(rU). Acts as a negative regulator of antiviral signaling. Negatively regulates cellular antiviral responses mediated by MAVS signaling. It acts as an adapter between MAVS and the E3 ubiquitin ligase ITCH, therefore triggering MAVS ubiquitination and degradation. Negativeley regulates the cGAS-STING pathway via interaction with CGAS, preventing the formation of liquid-like droplets in which CGAS is activated. Together with PCBP1, required for erythropoiesis, possibly by regulating mRNA splicing. Functionally, (Microbial infection) In case of infection by poliovirus, binds to the viral internal ribosome entry site (IRES) and stimulates the IRES-mediated translation. Also plays a role in initiation of viral RNA replication in concert with the viral protein 3CD. In Homo sapiens (Human), this protein is Poly(rC)-binding protein 2.